Consider the following 210-residue polypeptide: Floral homeotic protein FBP1 (210 aa).

Positions 3 to 57 (RGKIEIKRIENSSNRQVTYSKRRNGILKKAKEISVLCDARVSVIIFASSGKMHEF) constitute an MADS-box domain. Positions 82–173 (HENLDNEINK…QLEIATMNRN (92 aa)) constitute a K-box domain.

In terms of tissue distribution, petals.

The protein localises to the nucleus. Functionally, probable transcription factor. This Petunia hybrida (Petunia) protein is Floral homeotic protein FBP1 (FBP1).